The chain runs to 137 residues: ATP synthase epsilon chain, chloroplastic (137 aa).

The protein belongs to the ATPase epsilon chain family. As to quaternary structure, F-type ATPases have 2 components, CF(1) - the catalytic core - and CF(0) - the membrane proton channel. CF(1) has five subunits: alpha(3), beta(3), gamma(1), delta(1), epsilon(1). CF(0) has three main subunits: a, b and c.

Its subcellular location is the plastid. It localises to the chloroplast thylakoid membrane. Functionally, produces ATP from ADP in the presence of a proton gradient across the membrane. The polypeptide is ATP synthase epsilon chain, chloroplastic (Pinus koraiensis (Korean pine)).